The chain runs to 105 residues: Putative membrane protein insertion efficiency factor (105 aa).

The protein belongs to the UPF0161 family.

It localises to the cell membrane. Functionally, could be involved in insertion of integral membrane proteins into the membrane. The sequence is that of Putative membrane protein insertion efficiency factor from Bifidobacterium longum (strain NCC 2705).